The chain runs to 966 residues: Serine/threonine-protein kinase 10 (966 aa).

Residues Ser13 and Ser20 each carry the phosphoserine modification. Positions 36 to 294 constitute a Protein kinase domain; the sequence is WEIVGELGDG…AAQLLQHPFV (259 aa). ATP is bound by residues 42–50 and Lys65; that span reads LGDGAFGKV. The active-site Proton acceptor is Asp157. Residues 175 to 224 form an activation segment region; it reads DFGVSAKNLKTLQKRDSFIGTPYWMAPEVVLCETMKDAPYDYKADIWSLG. Thr185 carries the phosphothreonine; by autocatalysis modification. Phosphoserine is present on Ser191. Polar residues-rich tracts occupy residues 341-363 and 371-392; these read TQDSANVTQPSLDSNKLLQDSST and QEPVSGSCSQPSGDGPLQTTSP. Positions 341-497 are disordered; the sequence is TQDSANVTQP…NLSTSESMDY (157 aa). Residues 421-430 are compositionally biased toward basic and acidic residues; sequence IQMDEEKQIP. Residues Ser437, Ser449, Ser453, and Ser484 each carry the phosphoserine modification. Residues 438–456 are compositionally biased toward polar residues; it reads PAASKSQKANQSRPNSSAL. Positions 485–497 are enriched in polar residues; that stretch reads DCSNLSTSESMDY. A phosphoserine mark is found at Ser513 and Ser548. The stretch at 588–936 forms a coiled coil; sequence LQLEQMHKRF…LNQKKREQEM (349 aa). Disordered stretches follow at residues 660-692, 826-865, and 901-966; these read KKEVKSEVEKLPRQQRKESMKQKMEEHSQKKQR, INGAGSASEQREKIKQFSQQEEKRQKAERLQQQQKHENQM, and LDES…GDAS. 2 stretches are compositionally biased toward basic and acidic residues: residues 834–865 and 901–946; these read EQREKIKQFSQQEEKRQKAERLQQQQKHENQM and LDES…EAEP. Thr950 is modified (phosphothreonine). A compositionally biased stretch (polar residues) spans 950-966; that stretch reads TPSKASNFFPYSSGDAS.

This sequence belongs to the protein kinase superfamily. STE Ser/Thr protein kinase family. STE20 subfamily. In terms of assembly, homodimer; homodimerization is required for activation segment autophosphorylation. Autophosphorylates following homodimerization, leading to activation of the protein. Expressed predominantly in lymphoid organs such as spleen, thymus, and bone marrow.

Its subcellular location is the cell membrane. The catalysed reaction is L-seryl-[protein] + ATP = O-phospho-L-seryl-[protein] + ADP + H(+). The enzyme catalyses L-threonyl-[protein] + ATP = O-phospho-L-threonyl-[protein] + ADP + H(+). Its activity is regulated as follows. Inhibited by the pyrrole-indolinone inhibitor SU11274 (K00593): intercalates between the ATP-binding Lys-65 and alpha-C glutamate (Glu-81), resulting in a partial disordering of the lysine side chain. Also specifically inhibited by erlotinib. Slightly inhibited by gefitinib. Serine/threonine-protein kinase involved in regulation of lymphocyte migration. Phosphorylates MSN, and possibly PLK1. Involved in regulation of lymphocyte migration by mediating phosphorylation of ERM proteins such as MSN. Acts as a negative regulator of MAP3K1/MEKK1. May also act as a cell cycle regulator by acting as a polo kinase kinase: mediates phosphorylation of PLK1 in vitro; however such data require additional evidences in vivo. In Mus musculus (Mouse), this protein is Serine/threonine-protein kinase 10 (Stk10).